Reading from the N-terminus, the 340-residue chain is tRNA N6-adenosine threonylcarbamoyltransferase (340 aa).

The Fe cation site is built by H111 and H115. Substrate contacts are provided by residues 134 to 138 (LVSGG), D167, G180, and N276. Residue D304 coordinates Fe cation.

Belongs to the KAE1 / TsaD family. Fe(2+) serves as cofactor.

The protein localises to the cytoplasm. It catalyses the reaction L-threonylcarbamoyladenylate + adenosine(37) in tRNA = N(6)-L-threonylcarbamoyladenosine(37) in tRNA + AMP + H(+). Required for the formation of a threonylcarbamoyl group on adenosine at position 37 (t(6)A37) in tRNAs that read codons beginning with adenine. Is involved in the transfer of the threonylcarbamoyl moiety of threonylcarbamoyl-AMP (TC-AMP) to the N6 group of A37, together with TsaE and TsaB. TsaD likely plays a direct catalytic role in this reaction. This is tRNA N6-adenosine threonylcarbamoyltransferase from Helicobacter pylori (strain ATCC 700392 / 26695) (Campylobacter pylori).